A 426-amino-acid polypeptide reads, in one-letter code: Serine--tRNA ligase (426 aa).

Threonine 233–glutamate 235 is a binding site for L-serine. ATP is bound at residue arginine 264–glutamate 266. Residue glutamate 287 participates in L-serine binding. ATP is bound at residue glutamate 351–serine 354. Serine 387 lines the L-serine pocket.

The protein belongs to the class-II aminoacyl-tRNA synthetase family. Type-1 seryl-tRNA synthetase subfamily. As to quaternary structure, homodimer. The tRNA molecule binds across the dimer.

The protein localises to the cytoplasm. The catalysed reaction is tRNA(Ser) + L-serine + ATP = L-seryl-tRNA(Ser) + AMP + diphosphate + H(+). The enzyme catalyses tRNA(Sec) + L-serine + ATP = L-seryl-tRNA(Sec) + AMP + diphosphate + H(+). The protein operates within aminoacyl-tRNA biosynthesis; selenocysteinyl-tRNA(Sec) biosynthesis; L-seryl-tRNA(Sec) from L-serine and tRNA(Sec): step 1/1. Its function is as follows. Catalyzes the attachment of serine to tRNA(Ser). Is also able to aminoacylate tRNA(Sec) with serine, to form the misacylated tRNA L-seryl-tRNA(Sec), which will be further converted into selenocysteinyl-tRNA(Sec). This Pseudomonas fluorescens (strain Pf0-1) protein is Serine--tRNA ligase.